The sequence spans 333 residues: Phosphoribosylformylglycinamidine cyclo-ligase (333 aa).

Belongs to the AIR synthase family.

It localises to the cytoplasm. It catalyses the reaction 2-formamido-N(1)-(5-O-phospho-beta-D-ribosyl)acetamidine + ATP = 5-amino-1-(5-phospho-beta-D-ribosyl)imidazole + ADP + phosphate + H(+). It participates in purine metabolism; IMP biosynthesis via de novo pathway; 5-amino-1-(5-phospho-D-ribosyl)imidazole from N(2)-formyl-N(1)-(5-phospho-D-ribosyl)glycinamide: step 2/2. This chain is Phosphoribosylformylglycinamidine cyclo-ligase, found in Clostridium perfringens (strain ATCC 13124 / DSM 756 / JCM 1290 / NCIMB 6125 / NCTC 8237 / Type A).